Reading from the N-terminus, the 181-residue chain is Gastrokine-3 (181 aa).

The signal sequence occupies residues 1–20; it reads MKHLVASSILGVFVLTPSLA. The BRICHOS domain occupies 53 to 145; that stretch reads NNIFSEWDGI…MCRDDPTYFA (93 aa). C80 and C137 are joined by a disulfide.

This sequence belongs to the gastrokine family.

The protein localises to the secreted. Functionally, may inhibit gastric epithelial cell proliferation. The chain is Gastrokine-3 (GKN3P) from Homo sapiens (Human).